A 421-amino-acid polypeptide reads, in one-letter code: Putative zinc finger protein R05D3.3 (421 aa).

2 C2H2-type zinc fingers span residues 207-228 (VLCV…IEAH) and 234-257 (YKCS…RTQH). The disordered stretch occupies residues 400 to 421 (GSSITDSNEPGPSEIKKELAEV).

It localises to the nucleus. This Caenorhabditis elegans protein is Putative zinc finger protein R05D3.3.